We begin with the raw amino-acid sequence, 49 residues long: Delta-actitoxin-Axm1h (49 aa).

3 disulfides stabilise this stretch: Cys4–Cys46, Cys6–Cys36, and Cys29–Cys47.

Belongs to the sea anemone sodium channel inhibitory toxin family. Type I subfamily.

The protein resides in the secreted. It is found in the nematocyst. Functionally, binds specifically to voltage-gated sodium channels (Nav) (site 3), thereby delaying their inactivation during signal transduction. Thus it may strongly stimulate mammalian cardiac muscle contraction. The sequence is that of Delta-actitoxin-Axm1h from Anthopleura xanthogrammica (Giant green sea anemone).